Consider the following 116-residue polypeptide: Proline-rich protein 9 (116 aa).

In Bos taurus (Bovine), this protein is Proline-rich protein 9 (PRR9).